The chain runs to 509 residues: ATP synthase subunit alpha (509 aa).

Residue 169-176 participates in ATP binding; that stretch reads GDRQTGKT.

It belongs to the ATPase alpha/beta chains family. F-type ATPases have 2 components, CF(1) - the catalytic core - and CF(0) - the membrane proton channel. CF(1) has five subunits: alpha(3), beta(3), gamma(1), delta(1), epsilon(1). CF(0) has three main subunits: a(1), b(2) and c(9-12). The alpha and beta chains form an alternating ring which encloses part of the gamma chain. CF(1) is attached to CF(0) by a central stalk formed by the gamma and epsilon chains, while a peripheral stalk is formed by the delta and b chains.

Its subcellular location is the cell inner membrane. The enzyme catalyses ATP + H2O + 4 H(+)(in) = ADP + phosphate + 5 H(+)(out). In terms of biological role, produces ATP from ADP in the presence of a proton gradient across the membrane. The alpha chain is a regulatory subunit. The polypeptide is ATP synthase subunit alpha (Xanthobacter autotrophicus (strain ATCC BAA-1158 / Py2)).